A 766-amino-acid polypeptide reads, in one-letter code: Protein zer-1 homolog (766 aa).

Ala2 carries the post-translational modification N-acetylalanine. LRR repeat units lie at residues 226-245, 246-268, and 278-302; these read SLVLYNMDLSDDHIRVIVQL, HKLRHLDISRDRLSSYYKFKLTR, and LGNLMSLDISGHMILENCSISKMEE. ARM repeat units lie at residues 427-467, 511-556, 558-600, 602-643, and 714-756; these read RSEQ…NFGI, DNDH…NITD, TPDN…NVAE, KELR…HIMF, and PDKY…HCSN.

This sequence belongs to the zyg-11 family. In terms of assembly, interacts with the ELOC-ELOB/Elongin BC complex. Part of an E3 ubiquitin ligase complex including ZER1, CUL2 and Elongin BC.

Functionally, serves as substrate adapter subunit in the E3 ubiquitin ligase complex ZYG11B-CUL2-Elongin BC. Acts redudantly with ZYG11B to target substrates bearing N-terminal glycine degrons for proteasomal degradation. Involved in the clearance of proteolytic fragments generated by caspase cleavage during apoptosis since N-terminal glycine degrons are strongly enriched at caspase cleavage sites. Also important in the quality control of protein N-myristoylation in which N-terminal glycine degrons are conditionally exposed after a failure of N-myristoylation. In Pongo abelii (Sumatran orangutan), this protein is Protein zer-1 homolog (ZER1).